Consider the following 428-residue polypeptide: Serine--tRNA ligase (428 aa).

Residue 231–233 (TAE) participates in L-serine binding. An ATP-binding site is contributed by 262-264 (RSE). Glu285 contacts L-serine. 349–352 (EISS) contributes to the ATP binding site. Ser385 provides a ligand contact to L-serine.

Belongs to the class-II aminoacyl-tRNA synthetase family. Type-1 seryl-tRNA synthetase subfamily. Homodimer. The tRNA molecule binds across the dimer.

The protein resides in the cytoplasm. The enzyme catalyses tRNA(Ser) + L-serine + ATP = L-seryl-tRNA(Ser) + AMP + diphosphate + H(+). It catalyses the reaction tRNA(Sec) + L-serine + ATP = L-seryl-tRNA(Sec) + AMP + diphosphate + H(+). Its pathway is aminoacyl-tRNA biosynthesis; selenocysteinyl-tRNA(Sec) biosynthesis; L-seryl-tRNA(Sec) from L-serine and tRNA(Sec): step 1/1. Catalyzes the attachment of serine to tRNA(Ser). Is also able to aminoacylate tRNA(Sec) with serine, to form the misacylated tRNA L-seryl-tRNA(Sec), which will be further converted into selenocysteinyl-tRNA(Sec). The protein is Serine--tRNA ligase of Staphylococcus haemolyticus (strain JCSC1435).